Consider the following 361-residue polypeptide: MRAALALEDGTIVHGELFGSPREAEGEVVFNTSHTGFQEALTDPSYRGQILIMTFPMQGNYGILPEVGESDRVQVEGFVVRYLHDGPIHPRAEITLDEFLQDHGVPGIAGVDTRMLTRKIRTEGAMRGVLVPYEPDDQPSDEELLERVREVPHISEMDLVPQVSVREEYRFSDGKPEIVVIDCGVKRSILRELAKRGAGVTVVPYDTSAQEIMDIDPDGVVVSNGPGDPKRVRETVETVRELIGQVPLMGICLGNQILGLAEGGDTFKLKFGHRGANQPVKDLDKDRVYITSQNHGFALDPDSLRDTPLRVRWVNVNDGTVEGVVHTDAPAFSVQFHPEAGPGPWDTKWVFDEFLAMCREH.

Residues 1-173 (MRAALALEDG…SVREEYRFSD (173 aa)) are CPSase. L-glutamine is bound by residues S45, G225, and G227. Residues 177–361 (EIVVIDCGVK…DEFLAMCREH (185 aa)) form the Glutamine amidotransferase type-1 domain. The Nucleophile role is filled by C252. Residues L253, Q256, N294, G296, and F297 each contribute to the L-glutamine site. Catalysis depends on residues H337 and E339.

This sequence belongs to the CarA family. In terms of assembly, composed of two chains; the small (or glutamine) chain promotes the hydrolysis of glutamine to ammonia, which is used by the large (or ammonia) chain to synthesize carbamoyl phosphate. Tetramer of heterodimers (alpha,beta)4.

It catalyses the reaction hydrogencarbonate + L-glutamine + 2 ATP + H2O = carbamoyl phosphate + L-glutamate + 2 ADP + phosphate + 2 H(+). The catalysed reaction is L-glutamine + H2O = L-glutamate + NH4(+). It participates in amino-acid biosynthesis; L-arginine biosynthesis; carbamoyl phosphate from bicarbonate: step 1/1. The protein operates within pyrimidine metabolism; UMP biosynthesis via de novo pathway; (S)-dihydroorotate from bicarbonate: step 1/3. Its function is as follows. Small subunit of the glutamine-dependent carbamoyl phosphate synthetase (CPSase). CPSase catalyzes the formation of carbamoyl phosphate from the ammonia moiety of glutamine, carbonate, and phosphate donated by ATP, constituting the first step of 2 biosynthetic pathways, one leading to arginine and/or urea and the other to pyrimidine nucleotides. The small subunit (glutamine amidotransferase) binds and cleaves glutamine to supply the large subunit with the substrate ammonia. The protein is Carbamoyl phosphate synthase small chain of Methanopyrus kandleri (strain AV19 / DSM 6324 / JCM 9639 / NBRC 100938).